The chain runs to 239 residues: Ribosomal RNA small subunit methyltransferase G (239 aa).

S-adenosyl-L-methionine-binding positions include glycine 78, phenylalanine 83, 129 to 130 (AE), and arginine 148.

It belongs to the methyltransferase superfamily. RNA methyltransferase RsmG family.

Its subcellular location is the cytoplasm. Specifically methylates the N7 position of a guanine in 16S rRNA. This is Ribosomal RNA small subunit methyltransferase G from Clostridium tetani (strain Massachusetts / E88).